The following is a 37-amino-acid chain: Large ribosomal subunit protein bL36 (37 aa).

This sequence belongs to the bacterial ribosomal protein bL36 family.

The protein is Large ribosomal subunit protein bL36 of Clostridioides difficile (strain 630) (Peptoclostridium difficile).